A 360-amino-acid chain; its full sequence is UDP-3-O-acylglucosamine N-acyltransferase (360 aa).

Histidine 256 serves as the catalytic Proton acceptor. The interval 341–360 (EGSGAETAARPDDDRDEGRG) is disordered. Basic and acidic residues predominate over residues 349-360 (ARPDDDRDEGRG).

This sequence belongs to the transferase hexapeptide repeat family. LpxD subfamily. Homotrimer.

It catalyses the reaction a UDP-3-O-[(3R)-3-hydroxyacyl]-alpha-D-glucosamine + a (3R)-hydroxyacyl-[ACP] = a UDP-2-N,3-O-bis[(3R)-3-hydroxyacyl]-alpha-D-glucosamine + holo-[ACP] + H(+). Its pathway is bacterial outer membrane biogenesis; LPS lipid A biosynthesis. Catalyzes the N-acylation of UDP-3-O-acylglucosamine using 3-hydroxyacyl-ACP as the acyl donor. Is involved in the biosynthesis of lipid A, a phosphorylated glycolipid that anchors the lipopolysaccharide to the outer membrane of the cell. The chain is UDP-3-O-acylglucosamine N-acyltransferase from Rhodopseudomonas palustris (strain TIE-1).